The primary structure comprises 504 residues: ATP synthase subunit alpha (504 aa).

169-176 (GDRGTGKT) provides a ligand contact to ATP.

It belongs to the ATPase alpha/beta chains family. In terms of assembly, F-type ATPases have 2 components, CF(1) - the catalytic core - and CF(0) - the membrane proton channel. CF(1) has five subunits: alpha(3), beta(3), gamma(1), delta(1), epsilon(1). CF(0) has three main subunits: a(1), b(2) and c(9-12). The alpha and beta chains form an alternating ring which encloses part of the gamma chain. CF(1) is attached to CF(0) by a central stalk formed by the gamma and epsilon chains, while a peripheral stalk is formed by the delta and b chains.

It localises to the cell inner membrane. The enzyme catalyses ATP + H2O + 4 H(+)(in) = ADP + phosphate + 5 H(+)(out). In terms of biological role, produces ATP from ADP in the presence of a proton gradient across the membrane. The alpha chain is a regulatory subunit. This chain is ATP synthase subunit alpha, found in Leptospira biflexa serovar Patoc (strain Patoc 1 / Ames).